Consider the following 360-residue polypeptide: A-type ATP synthase subunit C (360 aa).

The protein belongs to the V-ATPase V0D/AC39 subunit family. As to quaternary structure, has multiple subunits, A(3), B(3), C, D, E, F, G, I and K(x); there may be a few other subunits as well.

Its subcellular location is the cell membrane. Component of the A-type ATP synthase that produces ATP from ADP in the presence of a proton gradient across the membrane. The chain is A-type ATP synthase subunit C from Methanosarcina mazei (strain ATCC BAA-159 / DSM 3647 / Goe1 / Go1 / JCM 11833 / OCM 88) (Methanosarcina frisia).